A 379-amino-acid chain; its full sequence is tRNA(Met) cytidine acetate ligase (379 aa).

ATP contacts are provided by residues 7 to 20 (ITEY…HQYH), Gly100, Asn153, and Arg178.

It belongs to the TmcAL family.

Its subcellular location is the cytoplasm. It catalyses the reaction cytidine(34) in elongator tRNA(Met) + acetate + ATP = N(4)-acetylcytidine(34) in elongator tRNA(Met) + AMP + diphosphate. Functionally, catalyzes the formation of N(4)-acetylcytidine (ac(4)C) at the wobble position of elongator tRNA(Met), using acetate and ATP as substrates. First activates an acetate ion to form acetyladenylate (Ac-AMP) and then transfers the acetyl group to tRNA to form ac(4)C34. This is tRNA(Met) cytidine acetate ligase from Staphylococcus aureus (strain MRSA252).